Consider the following 28-residue polypeptide: Potassium channel toxin alpha-KTx 9.7 (28 aa).

3 disulfide bridges follow: Cys3–Cys19, Cys6–Cys24, and Cys10–Cys26.

In terms of tissue distribution, expressed by the venom gland.

The protein resides in the secreted. Functionally, calcium channel activator. Rapidly and reversibly activates ryanodine receptor 1 (RYR1). In Hottentotta judaicus (Black scorpion), this protein is Potassium channel toxin alpha-KTx 9.7.